Consider the following 425-residue polypeptide: MNNIVIVGLQWGDEGKGKIVDYLSENADVVVRFQGGNNAGHTIVIDDEVYKLNLLPSAVLRADKISIIGNGVALDSHALVSEIESLKVKGVDVNYNNLMVSESCPLILSVHKDKEKLFEDLNGNHKIGTTNKGIGPCYEDKVGRRAIRLCDLENTDELNQRVDALLSYHNAIRKGLNYQVVKKEEILKEIQEISEKILLYKKPVWKILNDFMKEGKKIIFEGAQGAFLDIDHGTYPFVTSSNTVASQAITGSGLSYNAQIIGVAKAYTTRVGNGPFPTEQNNEIGDSLFSIGKELGTVSNRRRRCGWFDAVLVRQAVQLSGVSSIVLTKLDILDSFDTIKIGTGYKYGGKMYDYLPASHSIQKELEPIYEEFPGWKEKTQGKRSVKELPANLMKYVRKIEELIGVPIHLISTSPNREDVIKLKNL.

Residues 12-18 (GDEGKGK) and 40-42 (GHT) contribute to the GTP site. Catalysis depends on aspartate 13, which acts as the Proton acceptor. Mg(2+) is bound by residues aspartate 13 and glycine 40. IMP-binding positions include 13–16 (DEGK), 38–41 (NAGH), threonine 130, arginine 144, glutamine 224, threonine 239, and arginine 301. Histidine 41 functions as the Proton donor in the catalytic mechanism. 297 to 303 (TVSNRRR) lines the substrate pocket. GTP is bound by residues arginine 303, 329 to 331 (KLD), and 411 to 413 (STS).

The protein belongs to the adenylosuccinate synthetase family. In terms of assembly, homodimer. The cofactor is Mg(2+).

Its subcellular location is the cytoplasm. It carries out the reaction IMP + L-aspartate + GTP = N(6)-(1,2-dicarboxyethyl)-AMP + GDP + phosphate + 2 H(+). Its pathway is purine metabolism; AMP biosynthesis via de novo pathway; AMP from IMP: step 1/2. Plays an important role in the de novo pathway of purine nucleotide biosynthesis. Catalyzes the first committed step in the biosynthesis of AMP from IMP. The polypeptide is Adenylosuccinate synthetase (Wolbachia pipientis subsp. Culex pipiens (strain wPip)).